The primary structure comprises 75 residues: Sec-independent protein translocase protein TatA (75 aa).

A helical membrane pass occupies residues Met-1 to Gly-21. Residues Lys-44–Ser-75 are disordered.

It belongs to the TatA/E family. In terms of assembly, the Tat system comprises two distinct complexes: a TatABC complex, containing multiple copies of TatA, TatB and TatC subunits, and a separate TatA complex, containing only TatA subunits. Substrates initially bind to the TatABC complex, which probably triggers association of the separate TatA complex to form the active translocon.

It is found in the cell inner membrane. In terms of biological role, part of the twin-arginine translocation (Tat) system that transports large folded proteins containing a characteristic twin-arginine motif in their signal peptide across membranes. TatA could form the protein-conducting channel of the Tat system. This chain is Sec-independent protein translocase protein TatA, found in Bordetella petrii (strain ATCC BAA-461 / DSM 12804 / CCUG 43448).